The sequence spans 680 residues: Serine/threonine-protein kinase YPK1 (680 aa).

Over residues 1–11 (MYSWKSKFKFG) the composition is skewed to basic residues. Residues 1–117 (MYSWKSKFKF…GTPNDATSSS (117 aa)) form a disordered region. 2 stretches are compositionally biased toward basic and acidic residues: residues 12–21 (KSKEEKEAKH) and 41–56 (GEHD…DRKG). Residue threonine 57 is modified to Phosphothreonine. Over residues 59 to 71 (NPSNSSVVPVRVS) the composition is skewed to low complexity. 3 positions are modified to phosphoserine: serine 61, serine 64, and serine 71. Polar residues predominate over residues 73 to 83 (DASSSTSTVRD). The segment covering 84 to 97 (SNGGNSENTNSSQN) has biased composition (low complexity). The span at 98–117 (LDETANIGSTGTPNDATSSS) shows a compositional bias: polar residues. At serine 170 the chain carries Phosphoserine. A Protein kinase domain is found at 347–602 (FDLLKVIGKG…ADEIRNHPFF (256 aa)). Residues 353–361 (IGKGSFGKV) and lysine 376 each bind ATP. Aspartate 470 serves as the catalytic Proton acceptor. Phosphothreonine is present on threonine 502. A Phosphothreonine; by PKH1 modification is found at threonine 504. The 71-residue stretch at 603 to 673 (SQLSWKRLLM…VGNEQLGSSM (71 aa)) folds into the AGC-kinase C-terminal domain. Phosphoserine occurs at positions 644 and 653. Threonine 662 bears the Phosphothreonine; by PKH1 mark. Position 671 is a phosphoserine (serine 671).

It belongs to the protein kinase superfamily. AGC Ser/Thr protein kinase family. RAC subfamily. Post-translationally, autophosphorylated. Phytosphingosine level stimulates phosphorylation by PKH1. The N-terminal half is phosphorylated by FPK1. Phosphorylation is inhibited by exogenous addition of phytosphingosine.

Its subcellular location is the cytoplasm. It localises to the cell membrane. It catalyses the reaction L-seryl-[protein] + ATP = O-phospho-L-seryl-[protein] + ADP + H(+). The enzyme catalyses L-threonyl-[protein] + ATP = O-phospho-L-threonyl-[protein] + ADP + H(+). With respect to regulation, activated by phytosphingosine (PHS), a sphingoid long chain base. Activated by PKH1 phosphorylation. Its function is as follows. Plays an essential role in the proliferation of yeast cells. Involved in a signaling pathway, required for optimal cell wall integrity, that acts in parallel with the PKC1-SLT2-dependent pathway. Downstream kinase in the sphingolipid-mediated signaling pathway. Phosphorylation is regulated by the intracellular sphingolipid concentration. Disruption or inhibition of sphingolipid synthesis leads to the activation and phosphorylation of YPK1 through the TORC2 and PKH1 pathways, which in turn phosphorylates ORM1 and LAG1 to activate sphingolipid synthesis. Cooperates with SLI1 in mediating resistance to the sphingolipid biosynthesis inhibitor drug myriocin (ISP-1); kinase activity is essential for the resistance. Required for both receptor-mediated and fluid-phase endocytosis, but is not necessary for receptor phosphorylation or ubiquitination. Necessary for the internalization of plasma membrane proteins carrying different types of internalization signals. Acts downstream of the PKH kinases to control endocytosis by phosphorylating components of the endocytic machinery. Phosphorylation of residue Thr-504 in the activation loop and residue Thr-662 are essential for activity. Phosphorylates and down-regulates flippase activator FPK1. The protein is Serine/threonine-protein kinase YPK1 (YPK1) of Saccharomyces cerevisiae (strain ATCC 204508 / S288c) (Baker's yeast).